The primary structure comprises 561 residues: Potassium-transporting ATPase potassium-binding subunit (561 aa).

The next 10 helical transmembrane spans lie at 4–24 (IVMQ…PLGI), 65–85 (AVSV…VLML), 133–153 (IGLT…LFAV), 177–197 (LYIL…QGVV), 253–273 (FTNL…VVMF), 285–305 (AIMT…TISE), 380–400 (GLYG…LLVG), 417–437 (MVCL…AVAV), 484–504 (MVGA…ALYL), and 528–548 (FIGL…LPAL).

Belongs to the KdpA family. As to quaternary structure, the system is composed of three essential subunits: KdpA, KdpB and KdpC.

The protein resides in the cell membrane. In terms of biological role, part of the high-affinity ATP-driven potassium transport (or Kdp) system, which catalyzes the hydrolysis of ATP coupled with the electrogenic transport of potassium into the cytoplasm. This subunit binds the extracellular potassium ions and delivers the ions to the membrane domain of KdpB through an intramembrane tunnel. The sequence is that of Potassium-transporting ATPase potassium-binding subunit from Listeria monocytogenes serotype 4a (strain HCC23).